A 311-amino-acid polypeptide reads, in one-letter code: HPr kinase/phosphorylase (311 aa).

Residues His138 and Lys159 contribute to the active site. 153 to 160 (GDSGIGKS) is a binding site for ATP. Ser160 is a Mg(2+) binding site. Asp177 serves as the catalytic Proton acceptor; for phosphorylation activity. Proton donor; for dephosphorylation activity. The important for the catalytic mechanism of both phosphorylation and dephosphorylation stretch occupies residues 201-210 (LEIRGVGIID). Residue Glu202 participates in Mg(2+) binding. Residue Arg243 is part of the active site. Positions 264-269 (PVKTGR) are important for the catalytic mechanism of dephosphorylation.

It belongs to the HPrK/P family. In terms of assembly, homohexamer. Mg(2+) serves as cofactor.

It carries out the reaction [HPr protein]-L-serine + ATP = [HPr protein]-O-phospho-L-serine + ADP + H(+). The catalysed reaction is [HPr protein]-O-phospho-L-serine + phosphate + H(+) = [HPr protein]-L-serine + diphosphate. Its function is as follows. Catalyzes the ATP- as well as the pyrophosphate-dependent phosphorylation of a specific serine residue in HPr, a phosphocarrier protein of the phosphoenolpyruvate-dependent sugar phosphotransferase system (PTS). HprK/P also catalyzes the pyrophosphate-producing, inorganic phosphate-dependent dephosphorylation (phosphorolysis) of seryl-phosphorylated HPr (P-Ser-HPr). The two antagonistic activities of HprK/P are regulated by several intracellular metabolites, which change their concentration in response to the absence or presence of rapidly metabolisable carbon sources (glucose, fructose, etc.) in the growth medium. Therefore, by controlling the phosphorylation state of HPr, HPrK/P is a sensor enzyme that plays a major role in the regulation of carbon metabolism and sugar transport: it mediates carbon catabolite repression (CCR), and regulates PTS-catalyzed carbohydrate uptake and inducer exclusion. This chain is HPr kinase/phosphorylase, found in Streptococcus sanguinis (strain SK36).